Here is an 843-residue protein sequence, read N- to C-terminus: Junction-mediating and -regulatory protein (843 aa).

A disordered region spans residues 49–91 (RTAQRQRSADKAGGRSPARQQQRDSPAQSPARKAREEPEEGEE). The span at 66–76 (ARQQQRDSPAQ) shows a compositional bias: polar residues. Coiled-coil stretches lie at residues 190–225 (SELR…VDLL), 359–385 (RAKE…GTEA), and 416–487 (LLLT…AKKA). Disordered regions lie at residues 518–537 (QLKQ…WVSQ), 558–632 (VLKS…ITSE), and 652–688 (STLQ…TDTL). The segment covering 562–574 (TRLRFSHERRRST) has biased composition (basic residues). 2 stretches are compositionally biased toward polar residues: residues 582 to 596 (DAPQ…TQGL) and 613 to 630 (PETT…NAIT). A compositionally biased stretch (pro residues) spans 661–680 (ASPPPPPPPLPPPPPPPLPP). Positions 776–793 (ESNNILAQIRKGVKLKKV) constitute a WH2 domain. The tract at residues 821-843 (RIKEASPESEDEEESLPCTDWEN) is disordered. Positions 827 to 843 (PESEDEEESLPCTDWEN) are enriched in acidic residues.

It belongs to the JMY family.

Its subcellular location is the nucleus. The protein resides in the cytoplasmic vesicle. The protein localises to the cytoplasm. It localises to the cytoskeleton. It is found in the endomembrane system. Its subcellular location is the autophagosome membrane. Its function is as follows. Acts both as a nuclear p53/TP53-cofactor and a cytoplasmic regulator of actin dynamics depending on conditions. In nucleus, acts as a cofactor that increases p53/TP53 response. Increases p53/TP53-dependent transcription and apoptosis, suggesting an important role in p53/TP53 stress response such as DNA damage. In cytoplasm, acts as a nucleation-promoting factor for both branched and unbranched actin filaments. Activates the Arp2/3 complex to induce branched actin filament networks. Also catalyzes actin polymerization in the absence of Arp2/3, creating unbranched filaments. Contributes to cell motility by controlling actin dynamics. This is Junction-mediating and -regulatory protein (jmy) from Xenopus tropicalis (Western clawed frog).